The chain runs to 104 residues: Intracellular chorismate mutase (104 aa).

Positions 23–104 (AVPEIDDLRR…LRLGRGRLGY (82 aa)) constitute a Chorismate mutase domain. Residues Arg-59, Val-68, and Glu-72 each coordinate chorismate.

In terms of assembly, homodimer. Probably interacts with AroG (MSMEG_4244).

The protein localises to the cytoplasm. It carries out the reaction chorismate = prephenate. Its pathway is metabolic intermediate biosynthesis; prephenate biosynthesis; prephenate from chorismate: step 1/1. The formation of the complex with AroG activates the chorismate mutase activity. Functionally, catalyzes the Claisen rearrangement of chorismate to prephenate. Probably involved in the aromatic amino acid biosynthesis. The polypeptide is Intracellular chorismate mutase (Mycolicibacterium smegmatis (strain ATCC 700084 / mc(2)155) (Mycobacterium smegmatis)).